The primary structure comprises 172 residues: ATP synthase subunit b (172 aa).

The chain crosses the membrane as a helical span at residues 11–30 (LIAQIINFVIVLWVLNRFAF).

Belongs to the ATPase B chain family. In terms of assembly, F-type ATPases have 2 components, F(1) - the catalytic core - and F(0) - the membrane proton channel. F(1) has five subunits: alpha(3), beta(3), gamma(1), delta(1), epsilon(1). F(0) has three main subunits: a(1), b(2) and c(10-14). The alpha and beta chains form an alternating ring which encloses part of the gamma chain. F(1) is attached to F(0) by a central stalk formed by the gamma and epsilon chains, while a peripheral stalk is formed by the delta and b chains.

It is found in the cell inner membrane. Functionally, f(1)F(0) ATP synthase produces ATP from ADP in the presence of a proton or sodium gradient. F-type ATPases consist of two structural domains, F(1) containing the extramembraneous catalytic core and F(0) containing the membrane proton channel, linked together by a central stalk and a peripheral stalk. During catalysis, ATP synthesis in the catalytic domain of F(1) is coupled via a rotary mechanism of the central stalk subunits to proton translocation. Component of the F(0) channel, it forms part of the peripheral stalk, linking F(1) to F(0). The sequence is that of ATP synthase subunit b from Methylacidiphilum infernorum (isolate V4) (Methylokorus infernorum (strain V4)).